The chain runs to 344 residues: Arginine N-succinyltransferase (344 aa).

L125 is a binding site for succinyl-CoA. The Proton donor role is filled by H229.

This sequence belongs to the arginine N-succinyltransferase family.

It carries out the reaction succinyl-CoA + L-arginine = N(2)-succinyl-L-arginine + CoA + H(+). It functions in the pathway amino-acid degradation; L-arginine degradation via AST pathway; L-glutamate and succinate from L-arginine: step 1/5. Catalyzes the transfer of succinyl-CoA to arginine to produce N(2)-succinylarginine. The sequence is that of Arginine N-succinyltransferase from Salmonella typhi.